Here is a 638-residue protein sequence, read N- to C-terminus: RNA exonuclease 3 (638 aa).

Residues 37-136 are disordered; it reads AQDQVLEQKE…PPRRAPKEAL (100 aa). The span at 55–76 shows a compositional bias: basic and acidic residues; sequence LKLEPRPEAKETPKDDLRHVSD. Polar residues predominate over residues 77 to 111; the sequence is SGRSTPVKKTTAPATNAENISPVSRQPNIPKNTAT. An Exonuclease domain is found at 408–584; sequence ICFDCEMGYT…VEDALATGDL (177 aa). Positions 612-622 are enriched in polar residues; that stretch reads DSSSNTVSMQT. The segment at 612–638 is disordered; it reads DSSSNTVSMQTKLGEGAGAKRAREGTS.

Belongs to the REXO1/REXO3 family.

It is found in the cytoplasm. Its subcellular location is the nucleus. Functionally, 3' to 5' exoribonuclease required for proper 3' end maturation of MRP RNA and of the U5L snRNA. The sequence is that of RNA exonuclease 3 (rex3) from Emericella nidulans (strain FGSC A4 / ATCC 38163 / CBS 112.46 / NRRL 194 / M139) (Aspergillus nidulans).